An 890-amino-acid polypeptide reads, in one-letter code: Nitrate reductase [NADH] 2 (890 aa).

C165 provides a ligand contact to Mo-molybdopterin. In terms of domain architecture, Cytochrome b5 heme-binding spans 513–588 (SKMFSVSEVK…LEDYRIGELI (76 aa)). Heme is bound by residues H548 and H571. The FAD-binding FR-type domain occupies 634-746 (RQKIPCKLVS…KGPLGHIEYT (113 aa)). FAD is bound by residues 686–689 (RAYT), 703–707 (LIKVY), F708, F715, 720–722 (LMS), and T773.

It belongs to the nitrate reductase family. In terms of assembly, homodimer. Requires FAD as cofactor. It depends on heme as a cofactor. Mo-molybdopterin serves as cofactor.

The enzyme catalyses nitrite + NAD(+) + H2O = nitrate + NADH + H(+). In terms of biological role, nitrate reductase is a key enzyme involved in the first step of nitrate assimilation in plants, fungi and bacteria. In Phaseolus vulgaris (Kidney bean), this protein is Nitrate reductase [NADH] 2 (NIA2).